The chain runs to 529 residues: Bifunctional purine biosynthesis protein PurH (529 aa).

In terms of domain architecture, MGS-like spans 2 to 149 (TDLSPVRRAL…KNHAFVNVVV (148 aa)).

Belongs to the PurH family.

It carries out the reaction (6R)-10-formyltetrahydrofolate + 5-amino-1-(5-phospho-beta-D-ribosyl)imidazole-4-carboxamide = 5-formamido-1-(5-phospho-D-ribosyl)imidazole-4-carboxamide + (6S)-5,6,7,8-tetrahydrofolate. The enzyme catalyses IMP + H2O = 5-formamido-1-(5-phospho-D-ribosyl)imidazole-4-carboxamide. It participates in purine metabolism; IMP biosynthesis via de novo pathway; 5-formamido-1-(5-phospho-D-ribosyl)imidazole-4-carboxamide from 5-amino-1-(5-phospho-D-ribosyl)imidazole-4-carboxamide (10-formyl THF route): step 1/1. Its pathway is purine metabolism; IMP biosynthesis via de novo pathway; IMP from 5-formamido-1-(5-phospho-D-ribosyl)imidazole-4-carboxamide: step 1/1. The sequence is that of Bifunctional purine biosynthesis protein PurH from Ruegeria pomeroyi (strain ATCC 700808 / DSM 15171 / DSS-3) (Silicibacter pomeroyi).